The sequence spans 227 residues: ATP-dependent Clp protease proteolytic subunit 1 (227 aa).

Serine 124 (nucleophile) is an active-site residue. Residue histidine 149 is part of the active site.

The protein belongs to the peptidase S14 family. In terms of assembly, fourteen ClpP subunits assemble into 2 heptameric rings which stack back to back to give a disk-like structure with a central cavity, resembling the structure of eukaryotic proteasomes.

Its subcellular location is the cytoplasm. The catalysed reaction is Hydrolysis of proteins to small peptides in the presence of ATP and magnesium. alpha-casein is the usual test substrate. In the absence of ATP, only oligopeptides shorter than five residues are hydrolyzed (such as succinyl-Leu-Tyr-|-NHMec, and Leu-Tyr-Leu-|-Tyr-Trp, in which cleavage of the -Tyr-|-Leu- and -Tyr-|-Trp bonds also occurs).. Functionally, cleaves peptides in various proteins in a process that requires ATP hydrolysis. Has a chymotrypsin-like activity. Plays a major role in the degradation of misfolded proteins. The chain is ATP-dependent Clp protease proteolytic subunit 1 from Rhodopirellula baltica (strain DSM 10527 / NCIMB 13988 / SH1).